Consider the following 37-residue polypeptide: MKVRASVKPICEKCKVIKRKGKVMVICENPKHKQKQG.

The protein belongs to the bacterial ribosomal protein bL36 family.

This Alkaliphilus metalliredigens (strain QYMF) protein is Large ribosomal subunit protein bL36.